We begin with the raw amino-acid sequence, 175 residues long: MSRVAKKPISIPKGVEVSVQSDMLTVKGVKGVLTFPKSDNVNVVMDGDILTLSANDHSHVSLAGTVRAILSNMIKGVSIGFERKLELVGVGYRASMQGKDLNLSLGFSHPLLFVPPEGINLLTPSQTEVVVQGIDKQRVGEVAAKIRNFRPPEPYKGKGLKYATEAIMRKEAKKA.

This sequence belongs to the universal ribosomal protein uL6 family. Part of the 50S ribosomal subunit.

This protein binds to the 23S rRNA, and is important in its secondary structure. It is located near the subunit interface in the base of the L7/L12 stalk, and near the tRNA binding site of the peptidyltransferase center. This Xylella fastidiosa (strain M23) protein is Large ribosomal subunit protein uL6.